The sequence spans 758 residues: 5-methyltetrahydropteroyltriglutamate--homocysteine methyltransferase (758 aa).

5-methyltetrahydropteroyltri-L-glutamate-binding positions include 17 to 20 (RELK) and Lys-117. Residues 434–436 (IGS) and Glu-487 contribute to the L-homocysteine site. Residues 434–436 (IGS) and Glu-487 contribute to the L-methionine site. 5-methyltetrahydropteroyltri-L-glutamate is bound by residues 518-519 (RC) and Trp-564. Asp-602 serves as a coordination point for L-homocysteine. An L-methionine-binding site is contributed by Asp-602. Glu-608 serves as a coordination point for 5-methyltetrahydropteroyltri-L-glutamate. Zn(2+) contacts are provided by His-644, Cys-646, and Glu-668. The active-site Proton donor is the His-697. Residue Cys-729 coordinates Zn(2+).

This sequence belongs to the vitamin-B12 independent methionine synthase family. It depends on Zn(2+) as a cofactor.

It catalyses the reaction 5-methyltetrahydropteroyltri-L-glutamate + L-homocysteine = tetrahydropteroyltri-L-glutamate + L-methionine. The protein operates within amino-acid biosynthesis; L-methionine biosynthesis via de novo pathway; L-methionine from L-homocysteine (MetE route): step 1/1. In terms of biological role, catalyzes the transfer of a methyl group from 5-methyltetrahydrofolate to homocysteine resulting in methionine formation. In Serratia proteamaculans (strain 568), this protein is 5-methyltetrahydropteroyltriglutamate--homocysteine methyltransferase.